Consider the following 100-residue polypeptide: Putative protein adenylyltransferase MJ1379 (100 aa).

The short motif at 31-45 (GSYARGEQTEESDID) is the GSX(10)DXD motif element. Mg(2+) is bound by residues Asp43, Asp45, and Asp77.

The protein belongs to the MntA antitoxin family. Probably forms a complex with cognate toxin MJ1380. It depends on Mg(2+) as a cofactor.

The enzyme catalyses L-tyrosyl-[protein] + ATP = O-(5'-adenylyl)-L-tyrosyl-[protein] + diphosphate. It catalyses the reaction O-(5'-adenylyl)-L-tyrosyl-[protein] + ATP = O-[5'-(adenylyl-(5'-&gt;3')-adenylyl)]-L-tyrosyl-[protein] + diphosphate. In terms of biological role, probable antitoxin component of a putative type VII toxin-antitoxin (TA) system. Neutralizes cognate toxic MJ1380 by di-AMPylation. The polypeptide is Putative protein adenylyltransferase MJ1379 (Methanocaldococcus jannaschii (strain ATCC 43067 / DSM 2661 / JAL-1 / JCM 10045 / NBRC 100440) (Methanococcus jannaschii)).